Consider the following 616-residue polypeptide: DNA-binding protein RFX5 (616 aa).

Positions 1–29 (MAEDEPDAKSPKTGGRAPPGGAEAGEPTT) are disordered. At Ala2 the chain carries N-acetylalanine. Phosphoserine is present on Ser10. Over residues 13 to 29 (TGGRAPPGGAEAGEPTT) the composition is skewed to low complexity. Residues 25-90 (GEPTTLLQRL…PSTLSNEEYM (66 aa)) are N-terminal domain. The interval 62–66 (LYLYL) is leucine-rich region; critical for dimer formation and for interaction with RFXAP. The segment at residues 92 to 168 (AYRWIRNHLE…YCYSGIRRKT (77 aa)) is a DNA-binding region (RFX-type winged-helix). A PxLPxI/L motif; mediates interaction with RFXANK motif is present at residues 173–178 (PPLPGL). Phosphoserine is present on Ser185. 2 disordered regions span residues 252-314 (AEED…ESSA) and 391-616 (LPGP…ATPP). A compositionally biased stretch (basic and acidic residues) spans 276 to 293 (GAHKKPERLAQPPKDLEA). The segment covering 391–401 (LPGPGPGPGRA) has biased composition (pro residues). The span at 424–434 (GPHDKGVKRTA) shows a compositional bias: basic and acidic residues. Positions 463 to 473 (KRKRGRPRKKS) are enriched in basic residues. A compositionally biased stretch (gly residues) spans 534 to 546 (QGDGTVSKGGRGP). Residues 606–616 (QEHKDPKATPP) are compositionally biased toward basic and acidic residues.

Belongs to the RFX family. Homodimer. The RFX heterotetrameric complex consists of 2 molecules of RFX5 and one each of RFXAP and RFX-B/RFXANK; with each subunit representing a separate complementation group. Interacts (via PxLPxI/L motif) with RFXANK (via ankyrin repeats); the interaction is direct. RFX forms cooperative DNA binding complexes with X2BP and CBF/NF-Y. RFX associates with CIITA to form an active transcriptional complex. Post-translationally, phosphorylated. As to expression, ubiquitous.

The protein localises to the nucleus. Functionally, activates transcription from class II MHC promoters. Recognizes X-boxes. Mediates cooperative binding between RFX and NF-Y. RFX binds the X1 box of MHC-II promoters. The protein is DNA-binding protein RFX5 (RFX5) of Homo sapiens (Human).